A 390-amino-acid chain; its full sequence is S-adenosylmethionine:tRNA ribosyltransferase-isomerase (390 aa).

The tract at residues 1 to 22 (MTQPLSQDQHDSSSNMPTDNAE) is disordered.

This sequence belongs to the QueA family. As to quaternary structure, monomer.

It is found in the cytoplasm. The catalysed reaction is 7-aminomethyl-7-carbaguanosine(34) in tRNA + S-adenosyl-L-methionine = epoxyqueuosine(34) in tRNA + adenine + L-methionine + 2 H(+). It functions in the pathway tRNA modification; tRNA-queuosine biosynthesis. Functionally, transfers and isomerizes the ribose moiety from AdoMet to the 7-aminomethyl group of 7-deazaguanine (preQ1-tRNA) to give epoxyqueuosine (oQ-tRNA). In Psychrobacter sp. (strain PRwf-1), this protein is S-adenosylmethionine:tRNA ribosyltransferase-isomerase.